Here is a 264-residue protein sequence, read N- to C-terminus: S-adenosylmethionine decarboxylase proenzyme (264 aa).

The active-site Schiff-base intermediate with substrate; via pyruvic acid is the serine 113. Position 113 is a pyruvic acid (Ser); by autocatalysis (serine 113). The Proton acceptor; for processing activity role is filled by histidine 118. Cysteine 141 functions as the Proton donor; for catalytic activity in the catalytic mechanism.

It belongs to the prokaryotic AdoMetDC family. Type 2 subfamily. As to quaternary structure, heterooctamer of four alpha and four beta chains arranged as a tetramer of alpha/beta heterodimers. The cofactor is pyruvate. Post-translationally, is synthesized initially as an inactive proenzyme. Formation of the active enzyme involves a self-maturation process in which the active site pyruvoyl group is generated from an internal serine residue via an autocatalytic post-translational modification. Two non-identical subunits are generated from the proenzyme in this reaction, and the pyruvate is formed at the N-terminus of the alpha chain, which is derived from the carboxyl end of the proenzyme. The post-translation cleavage follows an unusual pathway, termed non-hydrolytic serinolysis, in which the side chain hydroxyl group of the serine supplies its oxygen atom to form the C-terminus of the beta chain, while the remainder of the serine residue undergoes an oxidative deamination to produce ammonia and the pyruvoyl group blocking the N-terminus of the alpha chain.

It catalyses the reaction S-adenosyl-L-methionine + H(+) = S-adenosyl 3-(methylsulfanyl)propylamine + CO2. The protein operates within amine and polyamine biosynthesis; S-adenosylmethioninamine biosynthesis; S-adenosylmethioninamine from S-adenosyl-L-methionine: step 1/1. In terms of biological role, catalyzes the decarboxylation of S-adenosylmethionine to S-adenosylmethioninamine (dcAdoMet), the propylamine donor required for the synthesis of the polyamines spermine and spermidine from the diamine putrescine. This Xanthomonas euvesicatoria pv. vesicatoria (strain 85-10) (Xanthomonas campestris pv. vesicatoria) protein is S-adenosylmethionine decarboxylase proenzyme.